The sequence spans 570 residues: Proline--tRNA ligase (570 aa).

Residues 238–257 (ARPAPAEHAEPRPLEKVETP) form a disordered region.

Belongs to the class-II aminoacyl-tRNA synthetase family. ProS type 1 subfamily. In terms of assembly, homodimer.

It is found in the cytoplasm. It carries out the reaction tRNA(Pro) + L-proline + ATP = L-prolyl-tRNA(Pro) + AMP + diphosphate. Its function is as follows. Catalyzes the attachment of proline to tRNA(Pro) in a two-step reaction: proline is first activated by ATP to form Pro-AMP and then transferred to the acceptor end of tRNA(Pro). As ProRS can inadvertently accommodate and process non-cognate amino acids such as alanine and cysteine, to avoid such errors it has two additional distinct editing activities against alanine. One activity is designated as 'pretransfer' editing and involves the tRNA(Pro)-independent hydrolysis of activated Ala-AMP. The other activity is designated 'posttransfer' editing and involves deacylation of mischarged Ala-tRNA(Pro). The misacylated Cys-tRNA(Pro) is not edited by ProRS. The sequence is that of Proline--tRNA ligase from Geobacter sulfurreducens (strain ATCC 51573 / DSM 12127 / PCA).